A 304-amino-acid chain; its full sequence is Oxygen-dependent coproporphyrinogen-III oxidase (304 aa).

A substrate-binding site is contributed by S93. Positions 97 and 107 each coordinate a divalent metal cation. H107 serves as the catalytic Proton donor. 109–111 (NVR) serves as a coordination point for substrate. A divalent metal cation-binding residues include H146 and H176. The tract at residues 241-276 (YVEFNLVYDRGTLFGLQSGGRTESILMSLPPQVRWG) is important for dimerization. 259 to 261 (GGR) lines the substrate pocket.

The protein belongs to the aerobic coproporphyrinogen-III oxidase family. As to quaternary structure, homodimer. The cofactor is a divalent metal cation.

The protein localises to the cytoplasm. The catalysed reaction is coproporphyrinogen III + O2 + 2 H(+) = protoporphyrinogen IX + 2 CO2 + 2 H2O. It participates in porphyrin-containing compound metabolism; protoporphyrin-IX biosynthesis; protoporphyrinogen-IX from coproporphyrinogen-III (O2 route): step 1/1. In terms of biological role, involved in the heme biosynthesis. Catalyzes the aerobic oxidative decarboxylation of propionate groups of rings A and B of coproporphyrinogen-III to yield the vinyl groups in protoporphyrinogen-IX. This chain is Oxygen-dependent coproporphyrinogen-III oxidase, found in Pseudomonas syringae pv. tomato (strain ATCC BAA-871 / DC3000).